The primary structure comprises 178 residues: ATP synthase subunit delta (178 aa).

It belongs to the ATPase delta chain family. As to quaternary structure, F-type ATPases have 2 components, F(1) - the catalytic core - and F(0) - the membrane proton channel. F(1) has five subunits: alpha(3), beta(3), gamma(1), delta(1), epsilon(1). F(0) has three main subunits: a(1), b(2) and c(10-14). The alpha and beta chains form an alternating ring which encloses part of the gamma chain. F(1) is attached to F(0) by a central stalk formed by the gamma and epsilon chains, while a peripheral stalk is formed by the delta and b chains.

The protein resides in the cell inner membrane. In terms of biological role, f(1)F(0) ATP synthase produces ATP from ADP in the presence of a proton or sodium gradient. F-type ATPases consist of two structural domains, F(1) containing the extramembraneous catalytic core and F(0) containing the membrane proton channel, linked together by a central stalk and a peripheral stalk. During catalysis, ATP synthesis in the catalytic domain of F(1) is coupled via a rotary mechanism of the central stalk subunits to proton translocation. Its function is as follows. This protein is part of the stalk that links CF(0) to CF(1). It either transmits conformational changes from CF(0) to CF(1) or is implicated in proton conduction. This chain is ATP synthase subunit delta, found in Laribacter hongkongensis (strain HLHK9).